The following is an 887-amino-acid chain: Phosphatidylinositol 3-kinase catalytic subunit type 3 (887 aa).

A C2 PI3K-type domain is found at Y35 to Q184. A disordered region spans residues V149–D170. Over residues P156–D170 the composition is skewed to polar residues. T163 carries the phosphothreonine; by AMPK modification. S165 carries the post-translational modification Phosphoserine; by AMPK. 3 positions are modified to phosphoserine: S244, S261, and S282. The PIK helical domain maps to D283–V520. The interval E416–D467 is disordered. A compositionally biased stretch (low complexity) spans Q423–Q444. Positions P449–A459 are enriched in pro residues. Residues I605–F871 form the PI3K/PI4K catalytic domain. Residues L611–M617 form a G-loop region. The interval G740 to N748 is catalytic loop. An activation loop region spans residues H759 to N780.

Belongs to the PI3/PI4-kinase family. Component of the PI3K (PI3KC3/PI3K-III/class III phosphatidylinositol 3-kinase) complex the core of which is composed of the catalytic subunit PIK3C3, the regulatory subunit PIK3R4 and BECN1 associating with additional regulatory/auxiliary subunits to form alternative complex forms. Alternative complex forms containing a fourth regulatory subunit in a mutually exclusive manner are: the PI3K complex I (PI3KC3-C1) containing ATG14, and the PI3K complex II (PI3KC3-C2) containing UVRAG. PI3KC3-C1 displays a V-shaped architecture with PIK3R4 serving as a bridge between PIK3C3 and the ATG14:BECN1 subcomplex. Both, PI3KC3-C1 and PI3KC3-C2, can associate with further regulatory subunits such as RUBCN, SH3GLB1/Bif-1 and AMBRA1. PI3KC3-C1 probably associates with PIK3CB. Interacts with RAB7A in the presence of PIK3R4. Interacts with AMBRA1. Interacts with BECN1P1/BECN2. Interacts with SLAMF1. May interact with DYN2. May be a component of a complex composed of RAB5A (in GDP-bound form), DYN2 and PIK3C3. Interacts with NCKAP1L. Interacts with ATG14; this interaction is increased in the absence of TMEM39A. Interacts with STEEP1; the interaction is STING1-dependent and required for trafficking of STING1 from the endoplasmic reticulum. Interacts with YWHAG. Interacts with ARMC3. Mn(2+) serves as cofactor. In terms of processing, ubiquitinated via 'Lys-29'- and 'Lys-48'-linked ubiquitination by UBE3C, promoting its degradation. Deubiquitination by ZRANB1/TRABID promotes its stabilization, leading to autophagosome maturation.

Its subcellular location is the midbody. It localises to the late endosome. The protein localises to the cytoplasmic vesicle. It is found in the autophagosome. The enzyme catalyses a 1,2-diacyl-sn-glycero-3-phospho-(1D-myo-inositol) + ATP = a 1,2-diacyl-sn-glycero-3-phospho-(1D-myo-inositol-3-phosphate) + ADP + H(+). Its function is as follows. Catalytic subunit of the PI3K complex that mediates formation of phosphatidylinositol 3-phosphate; different complex forms are believed to play a role in multiple membrane trafficking pathways: PI3KC3-C1 is involved in initiation of autophagosomes and PI3KC3-C2 in maturation of autophagosomes and endocytosis. As part of PI3KC3-C1, promotes endoplasmic reticulum membrane curvature formation prior to vesicle budding. Involved in regulation of degradative endocytic trafficking and required for the abscission step in cytokinesis, probably in the context of PI3KC3-C2. Involved in the transport of lysosomal enzyme precursors to lysosomes. Required for transport from early to late endosomes. This is Phosphatidylinositol 3-kinase catalytic subunit type 3 from Rattus norvegicus (Rat).